The sequence spans 177 residues: uncharacterized protein (177 aa).

It belongs to the flavoredoxin family. Requires FMN as cofactor.

This is an uncharacterized protein from Archaeoglobus fulgidus (strain ATCC 49558 / DSM 4304 / JCM 9628 / NBRC 100126 / VC-16).